A 1266-amino-acid polypeptide reads, in one-letter code: Neuronal-glial cell adhesion molecule (1266 aa).

The signal sequence occupies residues 1–20 (MALPMVGLLLLLLLGGPGAA). The Extracellular segment spans residues 21 to 1130 (ITIPPEYGAH…PQPGGGVCTK (1110 aa)). Ig-like C2-type domains are found at residues 36-128 (PELT…NVIA), 135-221 (PKEK…KEPL), 236-322 (PRLL…HSVT), 327-413 (PYWV…AFLH), 418-506 (PLRM…ALLE), and 510-597 (PTRI…AQLR). 4 cysteine pairs are disulfide-bonded: cysteine 58-cysteine 110, cysteine 154-cysteine 205, cysteine 260-cysteine 306, and cysteine 348-cysteine 397. An N-linked (GlcNAc...) asparagine glycan is attached at asparagine 97. Asparagine 288, asparagine 390, asparagine 434, asparagine 472, and asparagine 498 each carry an N-linked (GlcNAc...) asparagine glycan. A disulfide bridge connects residues cysteine 441 and cysteine 490. Cysteine 532 and cysteine 581 are joined by a disulfide. Fibronectin type-III domains lie at 603 to 698 (PSRD…TPPA), 700 to 804 (PERN…SGED), 809 to 930 (YPEN…TPEG), 934 to 1021 (PPEE…TKPE), and 1022 to 1118 (PPSP…TNGT). Residues 685–710 (EHHAPSAPIETPPAAPERNPGGVHGE) form a disordered region. Asparagine 712 and asparagine 819 each carry an N-linked (GlcNAc...) asparagine glycan. The segment at 857–882 (SRRQAPPDPPQIPQSPAEDPPPFPPV) is disordered. Positions 862 to 881 (PPDPPQIPQSPAEDPPPFPP) are enriched in pro residues. The Cell attachment site signature appears at 914 to 916 (RGD). The disordered stretch occupies residues 1004–1025 (STPRERPALQTVGSTKPEPPSP). N-linked (GlcNAc...) asparagine glycans are attached at residues asparagine 1061, asparagine 1075, asparagine 1100, and asparagine 1116. A helical membrane pass occupies residues 1131-1153 (GWFIGFVSSVVLLLLILLILCFI). The Cytoplasmic segment spans residues 1154–1266 (KRSKGGKYSV…ASPCAGPPLD (113 aa)). Residues 1163 to 1195 (VKDKEDTQVDSEARPMKDETFGEYRSLESEAEK) show a composition bias toward basic and acidic residues. The segment at 1163–1266 (VKDKEDTQVD…ASPCAGPPLD (104 aa)) is disordered. A compositionally biased stretch (gly residues) spans 1199 to 1211 (SGSGAGSGVGSPG).

This sequence belongs to the immunoglobulin superfamily. L1/neurofascin/NgCAM family. In terms of assembly, binds to itself and to axonin 1. In terms of tissue distribution, brain.

The protein resides in the cell membrane. In terms of biological role, mediates the adhesion of neurons to neurons and neurons to glia. It is involved in neuronal migration, neurite fasciculation and outgrowth. The polypeptide is Neuronal-glial cell adhesion molecule (Gallus gallus (Chicken)).